We begin with the raw amino-acid sequence, 266 residues long: Thymidylate synthase (266 aa).

A dUMP-binding site is contributed by Arg-24. Residue His-54 participates in (6R)-5,10-methylene-5,6,7,8-tetrahydrofolate binding. DUMP is bound at residue 129-130 (RR). Cys-149 functions as the Nucleophile in the catalytic mechanism. DUMP contacts are provided by residues 169 to 172 (RSAD), Asn-180, and 210 to 212 (HIY). Asp-172 contributes to the (6R)-5,10-methylene-5,6,7,8-tetrahydrofolate binding site. Ala-265 is a (6R)-5,10-methylene-5,6,7,8-tetrahydrofolate binding site.

It belongs to the thymidylate synthase family. Bacterial-type ThyA subfamily. Homodimer.

It is found in the cytoplasm. The catalysed reaction is dUMP + (6R)-5,10-methylene-5,6,7,8-tetrahydrofolate = 7,8-dihydrofolate + dTMP. Its pathway is pyrimidine metabolism; dTTP biosynthesis. Its function is as follows. Catalyzes the reductive methylation of 2'-deoxyuridine-5'-monophosphate (dUMP) to 2'-deoxythymidine-5'-monophosphate (dTMP) while utilizing 5,10-methylenetetrahydrofolate (mTHF) as the methyl donor and reductant in the reaction, yielding dihydrofolate (DHF) as a by-product. This enzymatic reaction provides an intracellular de novo source of dTMP, an essential precursor for DNA biosynthesis. This Mycobacterium ulcerans (strain Agy99) protein is Thymidylate synthase.